Reading from the N-terminus, the 447-residue chain is Secretin receptor (447 aa).

An N-terminal signal peptide occupies residues 1 to 28; that stretch reads MLSTMSPRLSLLLLWLLLLINAAHPVGA. Residues 29–140 lie on the Extracellular side of the membrane; that stretch reads LPRLCDVRRV…NERRHAYLLK (112 aa). 3 disulfide bridges follow: C46-C74, C65-C106, and C88-C122. N71, N99, N105, and N127 each carry an N-linked (GlcNAc...) asparagine glycan. A helical membrane pass occupies residues 141-166; it reads LKVMYTVGYSSSLAMLLVALSILCSF. Residues 167–173 are Cytoplasmic-facing; the sequence is RRLHCTR. A helical transmembrane segment spans residues 174–194; it reads NYIHMHLFVSFILRALSNFIK. Topologically, residues 195 to 215 are extracellular; the sequence is DAVLFPADDVTYCDAHRAGCK. C214 and C284 are joined by a disulfide. A helical transmembrane segment spans residues 216–238; the sequence is LVMIFFQYCIMANYAWLLVEGLY. At 239–253 the chain is on the cytoplasmic side; it reads LHTLLAISFFSERKC. A helical membrane pass occupies residues 254 to 275; it reads LQAFVLFGWGSPAIFVALWAVT. Residues 276-290 lie on the Extracellular side of the membrane; the sequence is RHFLEDFGCWDINSN. N290 carries an N-linked (GlcNAc...) asparagine glycan. Residues 291–314 traverse the membrane as a helical segment; the sequence is ASIWWVIRGPVILSIVINFIFFIN. The Cytoplasmic segment spans residues 315–339; sequence ILRILMRKLRTQETRGNETHHYKRL. The helical transmembrane segment at 340 to 355 threads the bilayer; it reads AKSTLLLIPLFGIHYI. Topologically, residues 356 to 366 are extracellular; sequence VFAFSPEGAME. Residues 367 to 390 traverse the membrane as a helical segment; sequence VQLFFELALGSFQGLVVAVLYCFL. Residues 391–447 lie on the Cytoplasmic side of the membrane; that stretch reads NGELEVQKKWRQWHLQEFPLRPVALSNSFSNATNGPTHSTKAGTSEQSRSIPGANVI. Polar residues predominate over residues 423 to 440; the sequence is TNGPTHSTKAGTSEQSRS. A disordered region spans residues 423–447; the sequence is TNGPTHSTKAGTSEQSRSIPGANVI.

This sequence belongs to the G-protein coupled receptor 2 family. Post-translationally, phosphorylated on Ser and Thr residues at the cytoplasmic C-terminus by G protein-coupled receptor kinases (GRKs). In terms of tissue distribution, in brain, expressed in the hippocampal CA1 region, the lower layer of cerebral cortex, the anterior olfactory nuclei, the anterior ventrolateral thalamus, the lateral region of hypothalamus, substantia nigra, tegmental area and central nucleus of the inferior colliculus, the ventral supramamillary nucleus and the cerebellum. Expressed in brown adipocytes: expression predominates in mature brown adipocytes (at protein level). Detected in the renal medulla, where it localized predominantly on the basolateral membranes of cells in the collecting ducts (blue arrow) and the ascending thick segments of the loop of Henle.

Its subcellular location is the cell membrane. The protein resides in the basolateral cell membrane. In terms of biological role, g protein-coupled receptor activated by secretin (SCT), which is involved in different processes such as regulation of the pH of the duodenal content, food intake and water homeostasis. Ligand binding causes a conformation change that triggers signaling via guanine nucleotide-binding proteins (G proteins) and activates cAMP-dependent pathway. Upon binding to secretin, regulates the pH of the duodenum by (1) inhibiting the secretion of gastric acid from the parietal cells of the stomach and (2) stimulating the production of bicarbonate (NaHCO(3)) from the ductal cells of the pancreas. In addition to regulating the pH of the duodenal content, plays a central role in diet induced thermogenesis: acts as a non-sympathetic brown fat (BAT) activator mediating prandial thermogenesis, which consequentially induces satiation. Mechanistically, secretin released by the gut after a meal binds to secretin receptor (SCTR) in brown adipocytes, activating brown fat thermogenesis by stimulating lipolysis, which is sensed in the brain and promotes satiation. Also able to stimulate lipolysis in white adipocytes. Also plays an important role in cellular osmoregulation by regulating renal water reabsorption. Also plays a role in the central nervous system: required for synaptic plasticity. The polypeptide is Secretin receptor (Mus musculus (Mouse)).